We begin with the raw amino-acid sequence, 37 residues long: Bactericidin B-2 (37 aa).

Glycine amide is present on glycine 37.

The protein belongs to the cecropin family.

Its subcellular location is the secreted. In terms of biological role, cecropins have lytic and antibacterial activity against several Gram-positive and Gram-negative bacteria. The sequence is that of Bactericidin B-2 from Manduca sexta (Tobacco hawkmoth).